The primary structure comprises 103 residues: Large ribosomal subunit protein bL21 (103 aa).

It belongs to the bacterial ribosomal protein bL21 family. In terms of assembly, part of the 50S ribosomal subunit. Contacts protein L20.

This protein binds to 23S rRNA in the presence of protein L20. The sequence is that of Large ribosomal subunit protein bL21 from Clostridium botulinum (strain Alaska E43 / Type E3).